The primary structure comprises 472 residues: 3-isopropylmalate dehydratase large subunit (472 aa).

Residues Cys-347, Cys-409, and Cys-412 each contribute to the [4Fe-4S] cluster site.

It belongs to the aconitase/IPM isomerase family. LeuC type 1 subfamily. In terms of assembly, heterodimer of LeuC and LeuD. [4Fe-4S] cluster is required as a cofactor.

The catalysed reaction is (2R,3S)-3-isopropylmalate = (2S)-2-isopropylmalate. It functions in the pathway amino-acid biosynthesis; L-leucine biosynthesis; L-leucine from 3-methyl-2-oxobutanoate: step 2/4. Functionally, catalyzes the isomerization between 2-isopropylmalate and 3-isopropylmalate, via the formation of 2-isopropylmaleate. The protein is 3-isopropylmalate dehydratase large subunit of Salinibacter ruber (strain DSM 13855 / M31).